Reading from the N-terminus, the 354-residue chain is FAD synthetase 1, chloroplastic (354 aa).

The transit peptide at 1 to 75 (MLCGGSRASV…SQGDDHPELS (75 aa)) directs the protein to the chloroplast. Positions 228–248 (SVNTEEEDSKSKERGQVSSTR) are disordered.

It depends on Mg(2+) as a cofactor.

The protein localises to the plastid. It is found in the chloroplast. The enzyme catalyses FMN + ATP + H(+) = FAD + diphosphate. It participates in cofactor biosynthesis; FAD biosynthesis; FAD from FMN: step 1/1. Its function is as follows. Catalyzes the adenylation of flavin mononucleotide (FMN) to form flavin adenine dinucleotide (FAD) coenzyme. This Arabidopsis thaliana (Mouse-ear cress) protein is FAD synthetase 1, chloroplastic.